Here is a 220-residue protein sequence, read N- to C-terminus: Recombination protein RecR (220 aa).

Residues 57 to 72 form a C4-type zinc finger; sequence CPICFNITDAEKCDVC. Positions 80-173 constitute a Toprim domain; sequence RTICVVEEPG…AISRIAYGVP (94 aa). Residues 190 to 220 form a disordered region; that stretch reads LTGRQTVSKPQPPQRPGDEDGADGAAVPASR.

The protein belongs to the RecR family.

May play a role in DNA repair. It seems to be involved in an RecBC-independent recombinational process of DNA repair. It may act with RecF and RecO. This is Recombination protein RecR from Deinococcus radiodurans (strain ATCC 13939 / DSM 20539 / JCM 16871 / CCUG 27074 / LMG 4051 / NBRC 15346 / NCIMB 9279 / VKM B-1422 / R1).